A 98-amino-acid polypeptide reads, in one-letter code: NADH-ubiquinone oxidoreductase chain 4L (98 aa).

The next 3 membrane-spanning stretches (helical) occupy residues 1 to 21 (MSLI…GLLM), 29 to 49 (ALLC…LTIL), and 61 to 81 (IILL…LVMI).

This sequence belongs to the complex I subunit 4L family. Core subunit of respiratory chain NADH dehydrogenase (Complex I) which is composed of 45 different subunits.

Its subcellular location is the mitochondrion inner membrane. The enzyme catalyses a ubiquinone + NADH + 5 H(+)(in) = a ubiquinol + NAD(+) + 4 H(+)(out). Core subunit of the mitochondrial membrane respiratory chain NADH dehydrogenase (Complex I) which catalyzes electron transfer from NADH through the respiratory chain, using ubiquinone as an electron acceptor. Part of the enzyme membrane arm which is embedded in the lipid bilayer and involved in proton translocation. This Platanista minor (Indus river dolphin) protein is NADH-ubiquinone oxidoreductase chain 4L (MT-ND4L).